A 311-amino-acid polypeptide reads, in one-letter code: Putative methylthioribose-1-phosphate isomerase (311 aa).

Substrate contacts are provided by residues 46 to 48, R80, and Q174; that span reads RGA. D215 serves as the catalytic Proton donor. 224–225 is a binding site for substrate; the sequence is NK.

This sequence belongs to the eIF-2B alpha/beta/delta subunits family. MtnA subfamily.

The catalysed reaction is 5-(methylsulfanyl)-alpha-D-ribose 1-phosphate = 5-(methylsulfanyl)-D-ribulose 1-phosphate. Functionally, catalyzes the interconversion of methylthioribose-1-phosphate (MTR-1-P) into methylthioribulose-1-phosphate (MTRu-1-P). The sequence is that of Putative methylthioribose-1-phosphate isomerase from Methanothermobacter thermautotrophicus (strain ATCC 29096 / DSM 1053 / JCM 10044 / NBRC 100330 / Delta H) (Methanobacterium thermoautotrophicum).